Consider the following 279-residue polypeptide: Conserved oligomeric Golgi complex subunit 7 (279 aa).

As to quaternary structure, component of the conserved oligomeric Golgi (COG or Sec34/Sec35) complex which consists of eight different proteins COG1-COG8.

It localises to the golgi apparatus membrane. Functionally, acts as a component of the peripheral membrane COG complex that is involved in intra-Golgi protein trafficking. COG is located at the cis-Golgi, and regulates tethering of retrograde intra-Golgi vesicles and possibly a number of other membrane trafficking events. The polypeptide is Conserved oligomeric Golgi complex subunit 7 (COG7) (Saccharomyces cerevisiae (strain ATCC 204508 / S288c) (Baker's yeast)).